The sequence spans 132 residues: Large ribosomal subunit protein bL20c (132 aa).

It belongs to the bacterial ribosomal protein bL20 family.

It localises to the plastid. The protein localises to the chloroplast. Functionally, binds directly to 23S ribosomal RNA and is necessary for the in vitro assembly process of the 50S ribosomal subunit. It is not involved in the protein synthesizing functions of that subunit. The protein is Large ribosomal subunit protein bL20c of Coffea arabica (Arabian coffee).